A 232-amino-acid chain; its full sequence is Proteasome subunit alpha type-2 (232 aa).

Belongs to the peptidase T1A family. As to quaternary structure, the 26S proteasome consists of a 20S proteasome core and two 19S regulatory subunits. The 20S proteasome core is composed of 28 subunits that are arranged in four stacked rings, resulting in a barrel-shaped structure. The two end rings are each formed by seven alpha subunits, and the two central rings are each formed by seven beta subunits. The catalytic chamber with the active sites is on the inside of the barrel.

It is found in the cytoplasm. Its subcellular location is the nucleus. In terms of biological role, the proteasome is a multicatalytic proteinase complex which is characterized by its ability to cleave peptides with Arg, Phe, Tyr, Leu, and Glu adjacent to the leaving group at neutral or slightly basic pH. The proteasome has an ATP-dependent proteolytic activity. This Dictyostelium discoideum (Social amoeba) protein is Proteasome subunit alpha type-2 (psmA2).